The chain runs to 665 residues: Cysteine-rich receptor-like protein kinase 26 (665 aa).

The first 22 residues, 1–22 (MLSLLLPLISLLFQIQCFTVKS), serve as a signal peptide directing secretion. At 23–283 (QPVPLNQICS…GDKNRGVPKA (261 aa)) the chain is on the extracellular side. 2 Gnk2-homologous domains span residues 26–129 (PLNQ…NRTI) and 135–244 (ISPH…PWRF). N33, N37, N67, N126, N146, and N266 each carry an N-linked (GlcNAc...) asparagine glycan. The segment at 251-275 (DDPSSVPATPSRPPKNETRSVTQGD) is disordered. A helical membrane pass occupies residues 284–304 (LIFASASVAIVVLFIVLLVVF). Residues 305-665 (LKLRRKENIR…YNSNTELYPR (361 aa)) are Cytoplasmic-facing. One can recognise a Protein kinase domain in the interval 344–624 (FSLENKLGEG…VLMLDGHTIA (281 aa)). ATP is bound by residues 350–358 (LGEGGFGAV) and K372. Residue Y417 is modified to Phosphotyrosine. The active-site Proton acceptor is D469. S473 carries the phosphoserine modification. Residue T510 is modified to Phosphothreonine. Y518 is modified (phosphotyrosine). Residues 641–665 (SDSSSSLGHNAKTSNYNSNTELYPR) are disordered. The segment covering 647 to 665 (LGHNAKTSNYNSNTELYPR) has biased composition (polar residues).

The protein belongs to the protein kinase superfamily. Ser/Thr protein kinase family. CRK subfamily.

Its subcellular location is the membrane. It carries out the reaction L-seryl-[protein] + ATP = O-phospho-L-seryl-[protein] + ADP + H(+). It catalyses the reaction L-threonyl-[protein] + ATP = O-phospho-L-threonyl-[protein] + ADP + H(+). This chain is Cysteine-rich receptor-like protein kinase 26 (CRK26), found in Arabidopsis thaliana (Mouse-ear cress).